The sequence spans 649 residues: Alpha-amylase (649 aa).

Glutamate 124 acts as the Nucleophile in catalysis. The active-site Proton donor is aspartate 215.

Belongs to the glycosyl hydrolase 57 family. In terms of assembly, homodimer.

The catalysed reaction is Endohydrolysis of (1-&gt;4)-alpha-D-glucosidic linkages in polysaccharides containing three or more (1-&gt;4)-alpha-linked D-glucose units.. Functionally, displays a broad range of substrate specificity, with the capacity to hydrolyze carbohydrates as simple as maltotriose. This is Alpha-amylase (amyA) from Pyrococcus furiosus (strain ATCC 43587 / DSM 3638 / JCM 8422 / Vc1).